A 2300-amino-acid chain; its full sequence is Protein Ycf2 (2300 aa).

1642–1649 (GSIGTGRS) lines the ATP pocket.

The protein belongs to the Ycf2 family.

The protein localises to the plastid. It localises to the chloroplast stroma. In terms of biological role, probable ATPase of unknown function. Its presence in a non-photosynthetic plant (Epifagus virginiana) and experiments in tobacco indicate that it has an essential function which is probably not related to photosynthesis. The chain is Protein Ycf2 from Vitis vinifera (Grape).